Consider the following 374-residue polypeptide: Cell division protein DivIB (374 aa).

The interval 1–90 (MWKISNENDI…EEEHFADRLP (90 aa)) is disordered. The Cytoplasmic portion of the chain corresponds to 1–103 (MWKISNENDI…KTRNKRLYRR (103 aa)). The span at 39–53 (YLKKQAEEAASKGEN) shows a compositional bias: basic and acidic residues. A compositionally biased stretch (polar residues) spans 56 to 75 (AEVTITLQEQSQEEPQQHLP). Residues 104-124 (LAFILTCLGTAILVALYFVSP) form a helical membrane-spanning segment. The Extracellular segment spans residues 125–374 (LSRLSEVTVS…GENQEVQQAE (250 aa)). In terms of domain architecture, POTRA spans 126 to 197 (SRLSEVTVSG…NSFKIDIQEY (72 aa)). The interval 325–374 (KESEETGSEVSEDSAVENQEVVDPNAGVATDGANNGTPTNGENQEVQQAE) is disordered. Residues 326 to 339 (ESEETGSEVSEDSA) are compositionally biased toward acidic residues. Positions 356–374 (GANNGTPTNGENQEVQQAE) are enriched in polar residues.

Belongs to the FtsQ/DivIB family. DivIB subfamily.

It is found in the cell membrane. In terms of biological role, cell division protein that may be involved in stabilizing or promoting the assembly of the division complex. In Enterococcus faecalis (strain 62), this protein is Cell division protein DivIB.